The primary structure comprises 298 residues: Probable 2-(5''-triphosphoribosyl)-3'-dephosphocoenzyme-A synthase (298 aa).

The protein belongs to the CitG/MdcB family.

It catalyses the reaction 3'-dephospho-CoA + ATP = 2'-(5''-triphospho-alpha-D-ribosyl)-3'-dephospho-CoA + adenine. The chain is Probable 2-(5''-triphosphoribosyl)-3'-dephosphocoenzyme-A synthase from Salmonella arizonae (strain ATCC BAA-731 / CDC346-86 / RSK2980).